We begin with the raw amino-acid sequence, 239 residues long: Uridylate kinase (239 aa).

13-16 contributes to the ATP binding site; sequence KLSG. Residue glycine 55 participates in UMP binding. ATP-binding residues include glycine 56 and arginine 60. Residues aspartate 75 and 136–143 each bind UMP; that span reads TGNPFFTT. ATP is bound by residues threonine 163, asparagine 164, tyrosine 169, and aspartate 172.

Belongs to the UMP kinase family. In terms of assembly, homohexamer.

It localises to the cytoplasm. The enzyme catalyses UMP + ATP = UDP + ADP. It functions in the pathway pyrimidine metabolism; CTP biosynthesis via de novo pathway; UDP from UMP (UMPK route): step 1/1. Its activity is regulated as follows. Inhibited by UTP. Catalyzes the reversible phosphorylation of UMP to UDP. In Neisseria meningitidis serogroup A / serotype 4A (strain DSM 15465 / Z2491), this protein is Uridylate kinase.